The primary structure comprises 166 residues: Ribonuclease H2 subunit C (166 aa).

Position 1 is an N-acetylmethionine (methionine 1).

Belongs to the RNase H2 subunit C family. As to quaternary structure, the RNase H2 complex is a heterotrimer composed of the catalytic subunit RNASEH2A and the non-catalytic subunits RNASEH2B and RNASEH2C.

It is found in the nucleus. Non catalytic subunit of RNase H2, an endonuclease that specifically degrades the RNA of RNA:DNA hybrids. Participates in DNA replication, possibly by mediating the removal of lagging-strand Okazaki fragment RNA primers during DNA replication. Mediates the excision of single ribonucleotides from DNA:RNA duplexes. The chain is Ribonuclease H2 subunit C (Rnaseh2c) from Mus musculus (Mouse).